The following is a 567-amino-acid chain: MEYDYIIIGAGSAGNVLAARLTEDADVTVLLLEAGGPDYRLDFRTQMPAALAFPLQGKRYNWAYETDPEPHMNNRRMECGRGKGLGGSSLINGMCYIRGNAMDFDHWASLSGLEDWSYLDCLPYFRKAETRDVGPNDFHGGEGPVSVTTPKIDNNPLFHAMVAAGVQAGYPRTDDLNGYQQEGFGPMDRTVTPKGRRASTARGYLDQARPRNNLTIITHALTDRILFEGKRATGVSYLKGDAGTGQTAHARREVLLCGGAIASPQILQRSGIGPAELLQRLDIPLVQALPGVGENLQDHLEMYLQYSCKQPVSLYPALLWFNQPKIGIEWLFNGTGVGASNQFEAGGFIRSRDAFTWPNIQYHFLPVAINYNGSNAVKEHGFQAHVGSMRSPSRGRIQVKSKDPRQHPSILFNYMSNEQDWHEFRDAIRITREIIAQPALDPYRGREISPGANVQSDDELDAFIREHAETAYHPSCSCKMGDDKMAVVDGQGRVHGVQGLRVVDASIMPQIITGNLNATTIMIAEKIADRIRGCQPLAKSNAAYFIAGDTPARTSPVRHSLPVTSYP.

4–33 (DYIIIGAGSAGNVLAARLTEDADVTVLLLE) contributes to the FAD binding site. Histidine 473 functions as the Proton acceptor in the catalytic mechanism.

It belongs to the GMC oxidoreductase family. FAD is required as a cofactor.

The catalysed reaction is choline + A = betaine aldehyde + AH2. The enzyme catalyses betaine aldehyde + NAD(+) + H2O = glycine betaine + NADH + 2 H(+). The protein operates within amine and polyamine biosynthesis; betaine biosynthesis via choline pathway; betaine aldehyde from choline (cytochrome c reductase route): step 1/1. Its function is as follows. Involved in the biosynthesis of the osmoprotectant glycine betaine. Catalyzes the oxidation of choline to betaine aldehyde and betaine aldehyde to glycine betaine at the same rate. The chain is Oxygen-dependent choline dehydrogenase from Yersinia pseudotuberculosis serotype IB (strain PB1/+).